We begin with the raw amino-acid sequence, 147 residues long: Cyanate hydratase (147 aa).

Catalysis depends on residues Arg-88, Glu-91, and Ser-114.

Belongs to the cyanase family.

It carries out the reaction cyanate + hydrogencarbonate + 3 H(+) = NH4(+) + 2 CO2. Catalyzes the reaction of cyanate with bicarbonate to produce ammonia and carbon dioxide. The chain is Cyanate hydratase from Thiobacillus denitrificans (strain ATCC 25259 / T1).